Here is a 188-residue protein sequence, read N- to C-terminus: UPF0301 protein XF_2228 (188 aa).

It belongs to the UPF0301 (AlgH) family.

The polypeptide is UPF0301 protein XF_2228 (Xylella fastidiosa (strain 9a5c)).